A 103-amino-acid chain; its full sequence is UPF0145 protein HH_1800 (103 aa).

It belongs to the UPF0145 family.

This chain is UPF0145 protein HH_1800, found in Helicobacter hepaticus (strain ATCC 51449 / 3B1).